We begin with the raw amino-acid sequence, 517 residues long: Protein disulfide-isomerase EUG1 (517 aa).

A signal peptide spans Met1–Ala29. The region spanning Thr30–Glu141 is the Thioredoxin 1 domain. Asn159, Asn174, Asn207, Asn293, and Asn462 each carry an N-linked (GlcNAc...) asparagine glycan. The Thioredoxin 2 domain maps to Tyr355 to Thr487. The Prevents secretion from ER motif lies at His514–Leu517.

It belongs to the protein disulfide isomerase family. In terms of assembly, interacts with EPS1. May have O-linked mannose residues.

The protein resides in the endoplasmic reticulum lumen. The catalysed reaction is Catalyzes the rearrangement of -S-S- bonds in proteins.. Probably interacts with nascent polypeptides in the endoplasmic reticulum. It is an essential gene only in the absence of PDI. Its native disulfide isomerase activity is very low. This is Protein disulfide-isomerase EUG1 (EUG1) from Saccharomyces cerevisiae (strain ATCC 204508 / S288c) (Baker's yeast).